The following is a 493-amino-acid chain: Dynein regulatory complex subunit 2 (493 aa).

Coiled-coil stretches lie at residues 99 to 163 and 253 to 280; these read DSVI…RKLI and KDEK…ILKG.

It belongs to the DRC2 family. Component of the nexin-dynein regulatory complex (N-DRC). Interacts with DRC1.

Its subcellular location is the cytoplasm. It is found in the cytoskeleton. It localises to the flagellum basal body. The protein localises to the cell projection. The protein resides in the cilium. Its subcellular location is the flagellum. It is found in the flagellum axoneme. Its function is as follows. Component of the nexin-dynein regulatory complex (N-DRC), a key regulator of ciliary/flagellar motility which maintains the alignment and integrity of the distal axoneme and regulates microtubule sliding in motile axonemes. Plays a critical role in the assembly of N-DRC and also stabilizes the assembly of multiple inner dynein arms and radial spokes. Coassembles with DRC1 to form a central scaffold needed for assembly of the N-DRC and its attachment to the outer doublet microtubules. In Mus musculus (Mouse), this protein is Dynein regulatory complex subunit 2 (Ccdc65).